Consider the following 471-residue polypeptide: ATP synthase subunit beta (471 aa).

154-161 (GGAGVGKT) contacts ATP.

Belongs to the ATPase alpha/beta chains family. As to quaternary structure, F-type ATPases have 2 components, CF(1) - the catalytic core - and CF(0) - the membrane proton channel. CF(1) has five subunits: alpha(3), beta(3), gamma(1), delta(1), epsilon(1). CF(0) has three main subunits: a(1), b(2) and c(9-12). The alpha and beta chains form an alternating ring which encloses part of the gamma chain. CF(1) is attached to CF(0) by a central stalk formed by the gamma and epsilon chains, while a peripheral stalk is formed by the delta and b chains.

The protein localises to the cell membrane. The catalysed reaction is ATP + H2O + 4 H(+)(in) = ADP + phosphate + 5 H(+)(out). In terms of biological role, produces ATP from ADP in the presence of a proton gradient across the membrane. The catalytic sites are hosted primarily by the beta subunits. This chain is ATP synthase subunit beta, found in Mesomycoplasma hyopneumoniae (strain J / ATCC 25934 / NCTC 10110) (Mycoplasma hyopneumoniae).